Reading from the N-terminus, the 480-residue chain is MAAVWRRSARLFILLQRHHSCTFTSQNLNHFMRSQKVMTDQSQTDLGLFKPPSTVRGMTELDRSAFNQTVSVPAIRLPTNILNKAVKSLKKVALQRPGLKRVVEEHSEDGNADCGNIEHRLLLLDPNSITSSDSFGSDEAEALKAYSVPQEIQSYELKLTYENFKSEEILRAVLPEGQGVTSGFSRVGHIAHMNLREHQLPYRKLIGQVIIDKNPGITCVVNKTNTIDSTYRNFQMEVLAGESNMVAKVRENGVLYEFDFSRVYWNPRLSTEHERIVSLLHRGDTVVDVFAGVGPFAIPAARRGCAVLANDLNPESFRWLQHNAKLNKVDQKITTSNLDGRDFIRGPVRERLPALMKGSQKIHVVMNLPALALEFLDAFKGLLDPEPDQSLSNLPQVHCYGFSKENDPQRDVVERAEASLKTNLQGQCSVHLVRNVAPNKEMMCVSFTLPRGVLYKTHTQDRDTSEEPCPKKQKCEDSTN.

The N-terminal 18 residues, 1 to 18 (MAAVWRRSARLFILLQRH), are a transit peptide targeting the mitochondrion. Residues His273, 311-312 (DL), 339-340 (DG), and Asn367 each bind S-adenosyl-L-methionine. The segment at 458–480 (HTQDRDTSEEPCPKKQKCEDSTN) is disordered.

Belongs to the class I-like SAM-binding methyltransferase superfamily. TRM5/TYW2 family. Monomer.

The protein localises to the mitochondrion matrix. The protein resides in the nucleus. It localises to the cytoplasm. The catalysed reaction is guanosine(37) in tRNA + S-adenosyl-L-methionine = N(1)-methylguanosine(37) in tRNA + S-adenosyl-L-homocysteine + H(+). In terms of biological role, involved in mitochondrial tRNA methylation. Specifically methylates the N1 position of guanosine-37 in various tRNAs. Methylation is not dependent on the nature of the nucleoside 5' of the target nucleoside. This is the first step in the biosynthesis of wybutosine (yW), a modified base adjacent to the anticodon of tRNAs and required for accurate decoding. The chain is tRNA (guanine(37)-N(1))-methyltransferase (trmt5) from Danio rerio (Zebrafish).